Here is a 265-residue protein sequence, read N- to C-terminus: Tryptophan synthase alpha chain (265 aa).

Residues E50 and D61 each act as proton acceptor in the active site.

Belongs to the TrpA family. Tetramer of two alpha and two beta chains.

The enzyme catalyses (1S,2R)-1-C-(indol-3-yl)glycerol 3-phosphate + L-serine = D-glyceraldehyde 3-phosphate + L-tryptophan + H2O. It participates in amino-acid biosynthesis; L-tryptophan biosynthesis; L-tryptophan from chorismate: step 5/5. Its function is as follows. The alpha subunit is responsible for the aldol cleavage of indoleglycerol phosphate to indole and glyceraldehyde 3-phosphate. This is Tryptophan synthase alpha chain from Trichodesmium erythraeum (strain IMS101).